The primary structure comprises 168 residues: Group IIF secretory phospholipase A2 (168 aa).

Positions 1-20 (MKKFFTVAILAGSVLSTAHG) are cleaved as a signal peptide. 7 disulfides stabilise this stretch: Cys-46-Cys-138, Cys-48-Cys-64, Cys-63-Cys-120, Cys-69-Cys-145, Cys-70-Cys-113, Cys-79-Cys-106, and Cys-98-Cys-111. Tyr-47, Gly-49, and Gly-51 together coordinate Ca(2+). Residue His-67 is part of the active site. Asp-68 serves as a coordination point for Ca(2+). Asn-92 and Asn-102 each carry an N-linked (GlcNAc...) asparagine glycan. Asp-114 is a catalytic residue. N-linked (GlcNAc...) asparagine glycans are attached at residues Asn-123 and Asn-144. Positions 139 to 168 (QGPTPNCSIYEPPPEEVTCSHQSPAPPAPP) are required for localization on the plasma membrane.

Belongs to the phospholipase A2 family. It depends on Ca(2+) as a cofactor. In terms of tissue distribution, expressed at high levels in placenta, testis, thymus and at lower levels in heart, kidney, liver and prostate. Highly expressed in rheumatoid arthritic tissues, including synovial lining cells in the intima, capillary endothelial cells and plasma cells.

Its subcellular location is the secreted. It localises to the cell membrane. The catalysed reaction is a 1,2-diacyl-sn-glycero-3-phosphocholine + H2O = a 1-acyl-sn-glycero-3-phosphocholine + a fatty acid + H(+). It catalyses the reaction 1-hexadecanoyl-2-(9Z-octadecenoyl)-sn-glycero-3-phospho-(1'-sn-glycerol) + H2O = 1-hexadecanoyl-sn-glycero-3-phospho-(1'-sn-glycerol) + (9Z)-octadecenoate + H(+). It carries out the reaction 1-hexadecanoyl-2-(9Z,12Z-octadecadienoyl)-sn-glycero-3-phosphoethanolamine + H2O = 1-hexadecanoyl-sn-glycero-3-phosphoethanolamine + (9Z,12Z)-octadecadienoate + H(+). The enzyme catalyses 1-hexadecanoyl-2-(5Z,8Z,11Z,14Z-eicosatetraenoyl)-sn-glycero-3-phosphoethanolamine + H2O = 1-hexadecanoyl-sn-glycero-3-phosphoethanolamine + (5Z,8Z,11Z,14Z)-eicosatetraenoate + H(+). The catalysed reaction is 1-hexadecanoyl-2-(9Z-octadecenoyl)-sn-glycero-3-phosphocholine + H2O = 1-hexadecanoyl-sn-glycero-3-phosphocholine + (9Z)-octadecenoate + H(+). It catalyses the reaction 1-hexadecanoyl-2-(9Z-octadecenoyl)-sn-glycero-3-phospho-L-serine + H2O = 1-hexadecanoyl-sn-glycero-3-phospho-L-serine + (9Z)-octadecenoate + H(+). Secretory calcium-dependent phospholipase A2 that primarily targets extracellular phospholipids. Hydrolyzes the ester bond of the fatty acyl group attached at the sn-2 position of phospholipids (phospholipase A2 activity), the catalytic efficiency decreasing in the following order: phosphatidylglycerols &gt; phosphatidylethanolamines &gt; phosphatidylcholines &gt; phosphatidylserines. May play a role in lipid mediator production in inflammatory conditions, by providing arachidonic acid to downstream cyclooxygenases and lipoxygenases. This Homo sapiens (Human) protein is Group IIF secretory phospholipase A2 (PLA2G2F).